The chain runs to 249 residues: Ribitol 2-dehydrogenase (249 aa).

20-43 (TGAASGIGLECARTLLGAGAKVVL) contacts NAD(+). The active-site Proton acceptor is tyrosine 160.

This sequence belongs to the short-chain dehydrogenases/reductases (SDR) family. Homotetramer.

The catalysed reaction is ribitol + NAD(+) = D-ribulose + NADH + H(+). The polypeptide is Ribitol 2-dehydrogenase (rbtD) (Klebsiella aerogenes (Enterobacter aerogenes)).